A 304-amino-acid chain; its full sequence is MATVIDRHSQPTWRDFLELTKPKVVVLMLITSLIGMLLATKAPLDGFVPWQVLIFGNLGIGLCAGAAAAVNHVVDRRIDSIMARTHKRPLAEGRVSPSMALGFALLLALAGMAVLLAFTNPLTAWLTLASLLGYAALYTGFLKRATPQNIVIGGLAGAAPPLLGWVAITGHLSAEPLLLVLIIFAWTPPHFWALCIHRKDEYAKADIPMLPVTHGERYTKLHILLYTLVLFAVSLMPFVIHMSGLVYLLCALALGARFLDWAWALYCDSRPHAAIRTFKYSIVYLFLLFMALLVDHYLPLKLLL.

8 helical membrane passes run 24–44 (VVVLMLITSLIGMLLATKAPL), 47–67 (FVPWQVLIFGNLGIGLCAGAA), 99–119 (MALGFALLLALAGMAVLLAFT), 122–142 (LTAWLTLASLLGYAALYTGFL), 150–170 (IVIGGLAGAAPPLLGWVAITG), 176–196 (PLLLVLIIFAWTPPHFWALCI), 228–248 (LVLFAVSLMPFVIHMSGLVYL), and 280–300 (YSIVYLFLLFMALLVDHYLPL).

The protein belongs to the UbiA prenyltransferase family. Protoheme IX farnesyltransferase subfamily.

The protein localises to the cell inner membrane. The catalysed reaction is heme b + (2E,6E)-farnesyl diphosphate + H2O = Fe(II)-heme o + diphosphate. Its pathway is porphyrin-containing compound metabolism; heme O biosynthesis; heme O from protoheme: step 1/1. Functionally, converts heme B (protoheme IX) to heme O by substitution of the vinyl group on carbon 2 of heme B porphyrin ring with a hydroxyethyl farnesyl side group. This is Protoheme IX farnesyltransferase 1 from Pseudomonas paraeruginosa (strain DSM 24068 / PA7) (Pseudomonas aeruginosa (strain PA7)).